The primary structure comprises 243 residues: MALEPIILIPARMGSTRLPQKALAEISGKPMIVHVAEQAKKAAIGRTIVATDHNDIAKAVAEYGHEYIITRGDHKSGSDRIYEALMRIDPEQRYNAILNIQGDLPTIMPREIIHALRPLENSFTDIATLGSQIIEESEKRDPNVVKIIGTPLSQNRLRALYFTRTTSPYGDGPLYHHIGIYAYRREALEKFVSFKPSTLEIREKLEQLRALEHNMRIDVEIVDTIPLGVDTQRDLERVRKILA.

This sequence belongs to the KdsB family.

It is found in the cytoplasm. The catalysed reaction is 3-deoxy-alpha-D-manno-oct-2-ulosonate + CTP = CMP-3-deoxy-beta-D-manno-octulosonate + diphosphate. Its pathway is nucleotide-sugar biosynthesis; CMP-3-deoxy-D-manno-octulosonate biosynthesis; CMP-3-deoxy-D-manno-octulosonate from 3-deoxy-D-manno-octulosonate and CTP: step 1/1. It participates in bacterial outer membrane biogenesis; lipopolysaccharide biosynthesis. Functionally, activates KDO (a required 8-carbon sugar) for incorporation into bacterial lipopolysaccharide in Gram-negative bacteria. In Bartonella tribocorum (strain CIP 105476 / IBS 506), this protein is 3-deoxy-manno-octulosonate cytidylyltransferase.